A 269-amino-acid chain; its full sequence is Malonyl-[acyl-carrier protein] O-methyltransferase (269 aa).

The protein belongs to the methyltransferase superfamily.

The catalysed reaction is malonyl-[ACP] + S-adenosyl-L-methionine = malonyl-[ACP] methyl ester + S-adenosyl-L-homocysteine. It participates in cofactor biosynthesis; biotin biosynthesis. Converts the free carboxyl group of a malonyl-thioester to its methyl ester by transfer of a methyl group from S-adenosyl-L-methionine (SAM). It allows to synthesize pimeloyl-ACP via the fatty acid synthetic pathway. This is Malonyl-[acyl-carrier protein] O-methyltransferase from Bacillus anthracis.